We begin with the raw amino-acid sequence, 324 residues long: NADH-ubiquinone oxidoreductase chain 1 (324 aa).

8 helical membrane passes run 3–23, 77–97, 104–124, 150–170, 174–194, 226–246, 250–270, and 297–317; these read FILSLIGSLLLIICVLVSVAF, ISPIFSLFLSLFVWMCMPFFV, LGGLFFLCCTSLGVYTVMVAG, LALIMLSFIFLIGSYNMIYFF, IYMWFLIILFPMSLVWLTISL, LIFMAEYASILFMSMLFCVIF, DVFNLLFYVKLTFISFVFIWA, and YLLFFIGFKILLFSFLLWIFF.

The protein belongs to the complex I subunit 1 family.

It localises to the mitochondrion inner membrane. It carries out the reaction a ubiquinone + NADH + 5 H(+)(in) = a ubiquinol + NAD(+) + 4 H(+)(out). In terms of biological role, core subunit of the mitochondrial membrane respiratory chain NADH dehydrogenase (Complex I) that is believed to belong to the minimal assembly required for catalysis. Complex I functions in the transfer of electrons from NADH to the respiratory chain. The immediate electron acceptor for the enzyme is believed to be ubiquinone. The sequence is that of NADH-ubiquinone oxidoreductase chain 1 (mt:ND1) from Drosophila yakuba (Fruit fly).